The chain runs to 234 residues: Demethylmenaquinone methyltransferase (234 aa).

S-adenosyl-L-methionine-binding positions include Thr-58, Asp-79, and 106-107 (NA).

It belongs to the class I-like SAM-binding methyltransferase superfamily. MenG/UbiE family.

The catalysed reaction is a 2-demethylmenaquinol + S-adenosyl-L-methionine = a menaquinol + S-adenosyl-L-homocysteine + H(+). It functions in the pathway quinol/quinone metabolism; menaquinone biosynthesis; menaquinol from 1,4-dihydroxy-2-naphthoate: step 2/2. Functionally, methyltransferase required for the conversion of demethylmenaquinol (DMKH2) to menaquinol (MKH2). This is Demethylmenaquinone methyltransferase from Geobacillus kaustophilus (strain HTA426).